A 499-amino-acid polypeptide reads, in one-letter code: Ethanolamine-phosphate phospho-lyase (499 aa).

Lys278 is modified (N6-(pyridoxal phosphate)lysine). Basic and acidic residues predominate over residues 468–479; that stretch reads RDSTTDSKENPS. The disordered stretch occupies residues 468 to 499; it reads RDSTTDSKENPSRKRNGMCTDTHSLLSKRLKT.

The protein belongs to the class-III pyridoxal-phosphate-dependent aminotransferase family. Homotetramer. It depends on pyridoxal 5'-phosphate as a cofactor.

Its subcellular location is the mitochondrion. It catalyses the reaction phosphoethanolamine + H2O = acetaldehyde + NH4(+) + phosphate. In terms of biological role, catalyzes the pyridoxal-phosphate-dependent breakdown of phosphoethanolamine, converting it to ammonia, inorganic phosphate and acetaldehyde. In Homo sapiens (Human), this protein is Ethanolamine-phosphate phospho-lyase (ETNPPL).